The chain runs to 331 residues: N-acetyl-alpha-D-glucosaminyl-diphospho-ditrans,octacis-undecaprenol 4-epimerase (331 aa).

NAD(+)-binding positions include 13 to 14 (FV), 34 to 39 (QQSHFY), 47 to 48 (DV), S109, Y132, and K136. Substrate contacts are provided by S109 and Y132. The active-site Proton acceptor is Y132. Residues 183-184 (GK) and 199-201 (YVG) contribute to the substrate site.

The protein belongs to the NAD(P)-dependent epimerase/dehydratase family. NAD(+) is required as a cofactor.

The protein resides in the cell membrane. The enzyme catalyses N-acetyl-alpha-D-glucosaminyl-di-trans,octa-cis-undecaprenyl diphosphate = N-acetyl-alpha-D-galactosaminyl-di-trans,octa-cis-undecaprenyl diphosphate. It functions in the pathway bacterial outer membrane biogenesis; LPS O-antigen biosynthesis. Functionally, involved in biosynthesis of the repeating tetrasaccharide unit of the O-antigen. Catalyzes the reversible epimerization of the hydroxyl group at position C4 of undecaprenyl pyrophosphate-N-acetylglucosamine (UndPP-GlcNAc) to yield undecaprenyl pyrophosphate-N-acetylgalactosamine (UndPP-GalNAc). The protein is N-acetyl-alpha-D-glucosaminyl-diphospho-ditrans,octacis-undecaprenol 4-epimerase of Escherichia coli O157:H7.